The primary structure comprises 285 residues: Shikimate dehydrogenase (NADP(+)) (285 aa).

Residues 20 to 22 and Thr-67 contribute to the shikimate site; that span reads SRS. Lys-71 functions as the Proton acceptor in the catalytic mechanism. Shikimate-binding residues include Asn-93 and Asp-108. Residues 132–136 and Met-224 each bind NADP(+); that span reads GAGGA. Residue Tyr-226 participates in shikimate binding. Gly-248 is a binding site for NADP(+).

Belongs to the shikimate dehydrogenase family. Homodimer.

The catalysed reaction is shikimate + NADP(+) = 3-dehydroshikimate + NADPH + H(+). The protein operates within metabolic intermediate biosynthesis; chorismate biosynthesis; chorismate from D-erythrose 4-phosphate and phosphoenolpyruvate: step 4/7. Its function is as follows. Involved in the biosynthesis of the chorismate, which leads to the biosynthesis of aromatic amino acids. Catalyzes the reversible NADPH linked reduction of 3-dehydroshikimate (DHSA) to yield shikimate (SA). The chain is Shikimate dehydrogenase (NADP(+)) from Bordetella avium (strain 197N).